The primary structure comprises 442 residues: Trigger factor (442 aa).

The region spanning 163–248 (YDRVTINYCI…IIKIEKKQEL (86 aa)) is the PPIase FKBP-type domain.

Belongs to the FKBP-type PPIase family. Tig subfamily.

It is found in the cytoplasm. It catalyses the reaction [protein]-peptidylproline (omega=180) = [protein]-peptidylproline (omega=0). Its function is as follows. Involved in protein export. Acts as a chaperone by maintaining the newly synthesized protein in an open conformation. Functions as a peptidyl-prolyl cis-trans isomerase. The sequence is that of Trigger factor from Buchnera aphidicola subsp. Acyrthosiphon pisum (strain Tuc7).